Reading from the N-terminus, the 105-residue chain is MPFKEITPQQAWEMMQQGAILVDIRDNMRFAYSHPKGAFHLTNQSFLQFEELADFDSPIIVSCYHGVSSRNVATFLVEQGYKNVFSMIGGFDGWCRAELPIDTTY.

The Rhodanese domain occupies 15 to 103 (MQQGAILVDI…WCRAELPIDT (89 aa)). C63 functions as the Cysteine persulfide intermediate in the catalytic mechanism.

The protein belongs to the GlpE family.

Its subcellular location is the cytoplasm. The enzyme catalyses thiosulfate + hydrogen cyanide = thiocyanate + sulfite + 2 H(+). It catalyses the reaction thiosulfate + [thioredoxin]-dithiol = [thioredoxin]-disulfide + hydrogen sulfide + sulfite + 2 H(+). Transferase that catalyzes the transfer of sulfur from thiosulfate to thiophilic acceptors such as cyanide or dithiols. May function in a CysM-independent thiosulfate assimilation pathway by catalyzing the conversion of thiosulfate to sulfite, which can then be used for L-cysteine biosynthesis. The sequence is that of Thiosulfate sulfurtransferase GlpE from Haemophilus influenzae (strain ATCC 51907 / DSM 11121 / KW20 / Rd).